A 566-amino-acid chain; its full sequence is Pyrophosphate--fructose 6-phosphate 1-phosphotransferase subunit beta 1 (566 aa).

Residue Ser-16 is modified to Phosphoserine. Diphosphate is bound at residue Gly-105. Asp-199 serves as a coordination point for Mg(2+). Residues 227–229 (TID), 266–267 (KY), 274–276 (MGR), Glu-335, and 440–443 (YEGR) each bind substrate. Asp-229 functions as the Proton acceptor in the catalytic mechanism.

It belongs to the phosphofructokinase type A (PFKA) family. PPi-dependent PFK group II subfamily. Clade 'Long' sub-subfamily. As to quaternary structure, tetramer of two alpha (regulatory) and two beta (catalytic) chains. Mg(2+) serves as cofactor.

The protein localises to the cytoplasm. The enzyme catalyses beta-D-fructose 6-phosphate + diphosphate = beta-D-fructose 1,6-bisphosphate + phosphate + H(+). It participates in carbohydrate degradation; glycolysis; D-glyceraldehyde 3-phosphate and glycerone phosphate from D-glucose: step 3/4. With respect to regulation, allosterically activated by fructose 2,6-bisphosphate. Functionally, catalytic subunit of pyrophosphate--fructose 6-phosphate 1-phosphotransferase. Catalyzes the phosphorylation of D-fructose 6-phosphate, the first committing step of glycolysis. Uses inorganic phosphate (PPi) as phosphoryl donor instead of ATP like common ATP-dependent phosphofructokinases (ATP-PFKs), which renders the reaction reversible, and can thus function both in glycolysis and gluconeogenesis. The sequence is that of Pyrophosphate--fructose 6-phosphate 1-phosphotransferase subunit beta 1 from Arabidopsis thaliana (Mouse-ear cress).